Consider the following 561-residue polypeptide: Dihydroxy-acid dehydratase (561 aa).

C50 serves as a coordination point for [2Fe-2S] cluster. Residue D82 coordinates Mg(2+). C123 contacts [2Fe-2S] cluster. Positions 124 and 125 each coordinate Mg(2+). An N6-carboxylysine modification is found at K125. C195 provides a ligand contact to [2Fe-2S] cluster. E447 contacts Mg(2+). The active-site Proton acceptor is S473.

Belongs to the IlvD/Edd family. As to quaternary structure, homodimer. [2Fe-2S] cluster is required as a cofactor. It depends on Mg(2+) as a cofactor.

The enzyme catalyses (2R)-2,3-dihydroxy-3-methylbutanoate = 3-methyl-2-oxobutanoate + H2O. The catalysed reaction is (2R,3R)-2,3-dihydroxy-3-methylpentanoate = (S)-3-methyl-2-oxopentanoate + H2O. The protein operates within amino-acid biosynthesis; L-isoleucine biosynthesis; L-isoleucine from 2-oxobutanoate: step 3/4. It participates in amino-acid biosynthesis; L-valine biosynthesis; L-valine from pyruvate: step 3/4. Its function is as follows. Functions in the biosynthesis of branched-chain amino acids. Catalyzes the dehydration of (2R,3R)-2,3-dihydroxy-3-methylpentanoate (2,3-dihydroxy-3-methylvalerate) into 2-oxo-3-methylpentanoate (2-oxo-3-methylvalerate) and of (2R)-2,3-dihydroxy-3-methylbutanoate (2,3-dihydroxyisovalerate) into 2-oxo-3-methylbutanoate (2-oxoisovalerate), the penultimate precursor to L-isoleucine and L-valine, respectively. In Chloroflexus aurantiacus (strain ATCC 29366 / DSM 635 / J-10-fl), this protein is Dihydroxy-acid dehydratase.